Here is a 329-residue protein sequence, read N- to C-terminus: CDP-6-deoxy-L-threo-D-glycero-4-hexulose-3-dehydrase reductase (329 aa).

The 2Fe-2S ferredoxin-type domain occupies 2–93 (SLNVKLHPSG…ELDVNYYPEL (92 aa)). [2Fe-2S] cluster is bound by residues Cys-37, Cys-42, Cys-45, and Cys-75. Residues 98–197 (KKTYPCKLDS…EGPQGTFFVR (100 aa)) enclose the FAD-binding FR-type domain.

In terms of assembly, monomer.

The protein operates within nucleotide-sugar biosynthesis; CDP-ascarylose biosynthesis. It functions in the pathway bacterial outer membrane biogenesis; lipopolysaccharide biosynthesis. Its function is as follows. Participates in the conversion of CDP-6-deoxy-D-glycero-L-threo-4-hexulose to 3,6-dideoxy-D-glycero-D-glycero-4-hexulose together with CDP-6-deoxy-D-glycero-L-threo-4-hexulose-3-dehydrase (E1) in two consecutive steps. The detailed mechanism of E3 is not yet resolved. The protein is CDP-6-deoxy-L-threo-D-glycero-4-hexulose-3-dehydrase reductase (ascD) of Yersinia pseudotuberculosis serotype I (strain IP32953).